The chain runs to 391 residues: 3-ketoacyl-CoA thiolase (391 aa).

Residue Cys95 is the Acyl-thioester intermediate of the active site. Catalysis depends on proton acceptor residues His347 and Cys377.

It belongs to the thiolase-like superfamily. Thiolase family. Heterotetramer of two alpha chains (FadB) and two beta chains (FadA).

Its subcellular location is the cytoplasm. The enzyme catalyses an acyl-CoA + acetyl-CoA = a 3-oxoacyl-CoA + CoA. It participates in lipid metabolism; fatty acid beta-oxidation. Functionally, catalyzes the final step of fatty acid oxidation in which acetyl-CoA is released and the CoA ester of a fatty acid two carbons shorter is formed. The polypeptide is 3-ketoacyl-CoA thiolase (Marinomonas sp. (strain MWYL1)).